Here is a 41-residue protein sequence, read N- to C-terminus: Large ribosomal subunit protein bL36 (41 aa).

This sequence belongs to the bacterial ribosomal protein bL36 family.

This Bartonella bacilliformis (strain ATCC 35685 / KC583 / Herrer 020/F12,63) protein is Large ribosomal subunit protein bL36.